We begin with the raw amino-acid sequence, 441 residues long: UDP-N-acetylglucosamine--N-acetylmuramyl-(pentapeptide) pyrophosphoryl-undecaprenol N-acetylglucosamine transferase (441 aa).

Residues 28–30 (TGG), Asn140, Arg176, Ser204, Ile257, and Gln302 contribute to the UDP-N-acetyl-alpha-D-glucosamine site.

The protein belongs to the glycosyltransferase 28 family. MurG subfamily.

The protein resides in the cell inner membrane. The catalysed reaction is di-trans,octa-cis-undecaprenyl diphospho-N-acetyl-alpha-D-muramoyl-L-alanyl-D-glutamyl-meso-2,6-diaminopimeloyl-D-alanyl-D-alanine + UDP-N-acetyl-alpha-D-glucosamine = di-trans,octa-cis-undecaprenyl diphospho-[N-acetyl-alpha-D-glucosaminyl-(1-&gt;4)]-N-acetyl-alpha-D-muramoyl-L-alanyl-D-glutamyl-meso-2,6-diaminopimeloyl-D-alanyl-D-alanine + UDP + H(+). It functions in the pathway cell wall biogenesis; peptidoglycan biosynthesis. Cell wall formation. Catalyzes the transfer of a GlcNAc subunit on undecaprenyl-pyrophosphoryl-MurNAc-pentapeptide (lipid intermediate I) to form undecaprenyl-pyrophosphoryl-MurNAc-(pentapeptide)GlcNAc (lipid intermediate II). The polypeptide is UDP-N-acetylglucosamine--N-acetylmuramyl-(pentapeptide) pyrophosphoryl-undecaprenol N-acetylglucosamine transferase (Xanthomonas oryzae pv. oryzae (strain MAFF 311018)).